The sequence spans 424 residues: Elongation factor 1-alpha (424 aa).

Residues lysine 5 to valine 223 form the tr-type G domain. Positions glycine 14–serine 21 are G1. Glycine 14–serine 21 contacts GTP. Serine 21 contacts Mg(2+). The tract at residues glycine 70–aspartate 74 is G2. A G3 region spans residues aspartate 91 to glycine 94. GTP is bound by residues aspartate 91–histidine 95 and asparagine 148–aspartate 151. The tract at residues asparagine 148–aspartate 151 is G4. A G5 region spans residues serine 187 to tyrosine 189.

It belongs to the TRAFAC class translation factor GTPase superfamily. Classic translation factor GTPase family. EF-Tu/EF-1A subfamily.

The protein resides in the cytoplasm. It catalyses the reaction GTP + H2O = GDP + phosphate + H(+). In terms of biological role, GTP hydrolase that promotes the GTP-dependent binding of aminoacyl-tRNA to the A-site of ribosomes during protein biosynthesis. This Picrophilus torridus (strain ATCC 700027 / DSM 9790 / JCM 10055 / NBRC 100828 / KAW 2/3) protein is Elongation factor 1-alpha.